The primary structure comprises 608 residues: Fatty acid amide hydrolase (608 aa).

Residues Lys-206 and Ser-282 each act as charge relay system in the active site. Position 303–306 (303–306 (GGGS)) interacts with substrate. Ser-306 serves as the catalytic Acyl-ester intermediate.

Belongs to the amidase family. In terms of assembly, forms homodimers.

The protein resides in the endoplasmic reticulum membrane. The protein localises to the cell membrane. The enzyme catalyses N-(9Z,12Z-octadecadienoyl)-ethanolamine + H2O = ethanolamine + (9Z,12Z)-octadecadienoate. The catalysed reaction is N-hexadecanoylethanolamine + H2O = ethanolamine + hexadecanoate. It carries out the reaction N-dodecanoylethanolamine + H2O = dodecanoate + ethanolamine. With respect to regulation, inhibited by methyl arachidonyl fluorophosphonate (MAFP). Catalyzes the hydrolysis of bioactive endogenous fatty acid amides to their corresponding acids. The hydrolysis of endogenous amidated lipids terminates their participation as lipid mediators in various signaling systems. Converts a wide range of N-acylethanolamines (NAEs) to their corresponding free fatty acids and ethanolamine. In Oryza sativa subsp. indica (Rice), this protein is Fatty acid amide hydrolase.